The sequence spans 161 residues: Cyclic pyranopterin monophosphate synthase (161 aa).

Residues 75 to 77 (LCH) and 113 to 114 (ME) contribute to the substrate site. Residue Asp-128 is part of the active site.

Belongs to the MoaC family. In terms of assembly, homohexamer; trimer of dimers.

It carries out the reaction (8S)-3',8-cyclo-7,8-dihydroguanosine 5'-triphosphate = cyclic pyranopterin phosphate + diphosphate. The protein operates within cofactor biosynthesis; molybdopterin biosynthesis. Functionally, catalyzes the conversion of (8S)-3',8-cyclo-7,8-dihydroguanosine 5'-triphosphate to cyclic pyranopterin monophosphate (cPMP). This Shigella sonnei (strain Ss046) protein is Cyclic pyranopterin monophosphate synthase.